The chain runs to 356 residues: Dihydroorotate dehydrogenase (quinone) (356 aa).

FMN contacts are provided by residues 67 to 71 (PGFDK) and threonine 91. Residue lysine 71 coordinates substrate. 116–120 (NRMGF) contributes to the substrate binding site. FMN is bound by residues asparagine 147 and asparagine 178. Position 178 (asparagine 178) interacts with substrate. Catalysis depends on serine 181, which acts as the Nucleophile. Asparagine 183 is a binding site for substrate. FMN is bound by residues lysine 218 and serine 246. 247 to 248 (NT) is a substrate binding site. Residues glycine 268, glycine 297, and 318–319 (YS) each bind FMN.

This sequence belongs to the dihydroorotate dehydrogenase family. Type 2 subfamily. In terms of assembly, monomer. Requires FMN as cofactor.

The protein localises to the cell membrane. The enzyme catalyses (S)-dihydroorotate + a quinone = orotate + a quinol. The protein operates within pyrimidine metabolism; UMP biosynthesis via de novo pathway; orotate from (S)-dihydroorotate (quinone route): step 1/1. Catalyzes the conversion of dihydroorotate to orotate with quinone as electron acceptor. The sequence is that of Dihydroorotate dehydrogenase (quinone) from Sphingopyxis alaskensis (strain DSM 13593 / LMG 18877 / RB2256) (Sphingomonas alaskensis).